Consider the following 505-residue polypeptide: Protein ERGIC-53-like (505 aa).

Residues 1 to 25 form the signal peptide; that stretch reads MLEIRGLSPSLCLLSLLLVLHGAER. The Lumenal portion of the chain corresponds to 26 to 438; it reads SQPPPRRRFE…SGWLLGSSTC (413 aa). Positions 32–254 constitute an L-type lectin-like domain; the sequence is RRFEYKLSFK…DVLSFLTFSL (223 aa). An N-linked (GlcNAc...) asparagine glycan is attached at asparagine 84. Cysteine 177 and cysteine 216 are joined by a disulfide. A helical transmembrane segment spans residues 439–459; sequence LHTSIFLFFLLLQTVGFFCYV. The Cytoplasmic segment spans residues 460–505; it reads NFSRQELDKRLQEYLSTGSLSLEPALPITRTIGVLRRQPISPSMQA.

The protein localises to the endoplasmic reticulum-Golgi intermediate compartment membrane. The chain is Protein ERGIC-53-like (Lman1l) from Mus musculus (Mouse).